The sequence spans 171 residues: CASP-like protein 0U2 (171 aa).

The Cytoplasmic segment spans residues 1-22; it reads MPVFGLAALKLNWEALSTPKFR. The chain crosses the membrane as a helical span at residues 23–42; the sequence is VTFAQWVCSLLMWSLMASYS. Residues 43 to 48 are Extracellular-facing; it reads KHGEFK. Residues 49 to 69 traverse the membrane as a helical segment; that stretch reads FVVVFGLVMWGLASTYLVYQL. Over 70–77 the chain is Cytoplasmic; the sequence is LNGPPLAP. The helical transmembrane segment at 78-98 threads the bilayer; the sequence is IVEFWANVAAGSLAFICLVLA. Residues 99-121 lie on the Extracellular side of the membrane; it reads SATCNRAVGEPQTKVCSGELKPK. Residues 122–142 form a helical membrane-spanning segment; that stretch reads ASAAFAFLLLCAYGGLAYLSW. The Cytoplasmic portion of the chain corresponds to 143-171; that stretch reads RTWRNPPTIASYALHDDPEFAQPLHSSHK.

This sequence belongs to the Casparian strip membrane proteins (CASP) family. Homodimer and heterodimers.

The protein localises to the cell membrane. The polypeptide is CASP-like protein 0U2 (Chlorokybus atmophyticus (Soil alga)).